The following is a 974-amino-acid chain: Bifunctional glutamine synthetase adenylyltransferase/adenylyl-removing enzyme (974 aa).

The tract at residues 1 to 464 (MKNAFLKTQL…HYAALFENEQ (464 aa)) is adenylyl removase. Residues 468–974 (LEIGNLVFTG…YSIFKQVMKY (507 aa)) form an adenylyl transferase region.

The protein belongs to the GlnE family. Mg(2+) serves as cofactor.

It catalyses the reaction [glutamine synthetase]-O(4)-(5'-adenylyl)-L-tyrosine + phosphate = [glutamine synthetase]-L-tyrosine + ADP. The enzyme catalyses [glutamine synthetase]-L-tyrosine + ATP = [glutamine synthetase]-O(4)-(5'-adenylyl)-L-tyrosine + diphosphate. In terms of biological role, involved in the regulation of glutamine synthetase GlnA, a key enzyme in the process to assimilate ammonia. When cellular nitrogen levels are high, the C-terminal adenylyl transferase (AT) inactivates GlnA by covalent transfer of an adenylyl group from ATP to specific tyrosine residue of GlnA, thus reducing its activity. Conversely, when nitrogen levels are low, the N-terminal adenylyl removase (AR) activates GlnA by removing the adenylyl group by phosphorolysis, increasing its activity. The regulatory region of GlnE binds the signal transduction protein PII (GlnB) which indicates the nitrogen status of the cell. The sequence is that of Bifunctional glutamine synthetase adenylyltransferase/adenylyl-removing enzyme from Bartonella henselae (strain ATCC 49882 / DSM 28221 / CCUG 30454 / Houston 1) (Rochalimaea henselae).